Consider the following 494-residue polypeptide: Probable cytochrome P450 518A1 (494 aa).

Residues 1–21 (MSILIILIISIIFYLIFDFLY) traverse the membrane as a helical segment. Position 438 (Cys-438) interacts with heme.

Belongs to the cytochrome P450 family. It depends on heme as a cofactor.

It localises to the membrane. In Dictyostelium discoideum (Social amoeba), this protein is Probable cytochrome P450 518A1 (cyp518A1).